We begin with the raw amino-acid sequence, 323 residues long: tRNA dimethylallyltransferase (323 aa).

21-28 (GPTACNKS) lines the ATP pocket. 23 to 28 (TACNKS) contributes to the substrate binding site. Interaction with substrate tRNA regions lie at residues 46–49 (DSAL), 171–175 (QRVLR), and 252–257 (RCVGYR).

This sequence belongs to the IPP transferase family. Monomer. It depends on Mg(2+) as a cofactor.

The catalysed reaction is adenosine(37) in tRNA + dimethylallyl diphosphate = N(6)-dimethylallyladenosine(37) in tRNA + diphosphate. Functionally, catalyzes the transfer of a dimethylallyl group onto the adenine at position 37 in tRNAs that read codons beginning with uridine, leading to the formation of N6-(dimethylallyl)adenosine (i(6)A). The polypeptide is tRNA dimethylallyltransferase (Buchnera aphidicola subsp. Baizongia pistaciae (strain Bp)).